An 89-amino-acid chain; its full sequence is SAP domain-containing new25 (89 aa).

Residues 44 to 78 form the SAP domain; the sequence is PSQWSKKQLIEYCKKNSLKTSGSHEELVIRVQNHL.

In Schizosaccharomyces pombe (strain 972 / ATCC 24843) (Fission yeast), this protein is SAP domain-containing new25 (new25).